Consider the following 300-residue polypeptide: uncharacterized protein (300 aa).

Positions Met-1–Gln-11 are enriched in polar residues. The interval Met-1 to Asp-20 is disordered. Residues Met-1–Arg-92 constitute a DNA-binding region (recombinase). A coiled-coil region spans residues Ser-162 to Glu-249.

This is an uncharacterized protein from Bacillus subtilis (strain 168).